Reading from the N-terminus, the 97-residue chain is Large ribosomal subunit protein uL23 (97 aa).

The protein belongs to the universal ribosomal protein uL23 family. Part of the 50S ribosomal subunit. Contacts protein L29, and trigger factor when it is bound to the ribosome.

Functionally, one of the early assembly proteins it binds 23S rRNA. One of the proteins that surrounds the polypeptide exit tunnel on the outside of the ribosome. Forms the main docking site for trigger factor binding to the ribosome. In Chelativorans sp. (strain BNC1), this protein is Large ribosomal subunit protein uL23.